Here is a 494-residue protein sequence, read N- to C-terminus: 3-octaprenyl-4-hydroxybenzoate carboxy-lyase (494 aa).

Mn(2+) is bound at residue N172. Residues 175-177 (IYR), 189-191 (RWL), and 194-195 (RG) each bind prenylated FMN. E238 contacts Mn(2+). D287 (proton donor) is an active-site residue.

This sequence belongs to the UbiD family. Homohexamer. The cofactor is prenylated FMN. Mn(2+) is required as a cofactor.

The protein localises to the cell membrane. It carries out the reaction a 4-hydroxy-3-(all-trans-polyprenyl)benzoate + H(+) = a 2-(all-trans-polyprenyl)phenol + CO2. Its pathway is cofactor biosynthesis; ubiquinone biosynthesis. Functionally, catalyzes the decarboxylation of 3-octaprenyl-4-hydroxy benzoate to 2-octaprenylphenol, an intermediate step in ubiquinone biosynthesis. The polypeptide is 3-octaprenyl-4-hydroxybenzoate carboxy-lyase (Escherichia coli O139:H28 (strain E24377A / ETEC)).